The chain runs to 286 residues: Sulfur carrier protein FdhD (286 aa).

The active-site Cysteine persulfide intermediate is C110. 247–252 (FARGEK) is a Mo-bis(molybdopterin guanine dinucleotide) binding site.

The protein belongs to the FdhD family.

The protein resides in the cytoplasm. Required for formate dehydrogenase (FDH) activity. Acts as a sulfur carrier protein that transfers sulfur from IscS to the molybdenum cofactor prior to its insertion into FDH. This Wolinella succinogenes (strain ATCC 29543 / DSM 1740 / CCUG 13145 / JCM 31913 / LMG 7466 / NCTC 11488 / FDC 602W) (Vibrio succinogenes) protein is Sulfur carrier protein FdhD.